Reading from the N-terminus, the 299-residue chain is Elongation factor Ts (299 aa).

The interval 82 to 85 is involved in Mg(2+) ion dislocation from EF-Tu; that stretch reads TDFV.

The protein belongs to the EF-Ts family.

The protein resides in the cytoplasm. In terms of biological role, associates with the EF-Tu.GDP complex and induces the exchange of GDP to GTP. It remains bound to the aminoacyl-tRNA.EF-Tu.GTP complex up to the GTP hydrolysis stage on the ribosome. The protein is Elongation factor Ts of Dechloromonas aromatica (strain RCB).